A 100-amino-acid polypeptide reads, in one-letter code: Integration host factor subunit alpha (100 aa).

This sequence belongs to the bacterial histone-like protein family. In terms of assembly, heterodimer of an alpha and a beta chain.

Its function is as follows. This protein is one of the two subunits of integration host factor, a specific DNA-binding protein that functions in genetic recombination as well as in transcriptional and translational control. The polypeptide is Integration host factor subunit alpha (Phenylobacterium zucineum (strain HLK1)).